Here is a 478-residue protein sequence, read N- to C-terminus: Sulfate adenylyltransferase subunit 1 (478 aa).

In terms of domain architecture, tr-type G spans 28–244 (KTMLRFLTCG…LESVDVVNAS (217 aa)). The segment at 37–44 (GSVDDGKS) is G1. 37–44 (GSVDDGKS) contacts GTP. The segment at 95–99 (GITID) is G2. Residues 116–119 (DTPG) form a G3 region. GTP-binding positions include 116–120 (DTPGH) and 171–174 (NKMD). The G4 stretch occupies residues 171–174 (NKMD). A G5 region spans residues 209–211 (SAL).

The protein belongs to the TRAFAC class translation factor GTPase superfamily. Classic translation factor GTPase family. CysN/NodQ subfamily. Heterodimer composed of CysD, the smaller subunit, and CysN.

It catalyses the reaction sulfate + ATP + H(+) = adenosine 5'-phosphosulfate + diphosphate. It participates in sulfur metabolism; hydrogen sulfide biosynthesis; sulfite from sulfate: step 1/3. In terms of biological role, with CysD forms the ATP sulfurylase (ATPS) that catalyzes the adenylation of sulfate producing adenosine 5'-phosphosulfate (APS) and diphosphate, the first enzymatic step in sulfur assimilation pathway. APS synthesis involves the formation of a high-energy phosphoric-sulfuric acid anhydride bond driven by GTP hydrolysis by CysN coupled to ATP hydrolysis by CysD. The protein is Sulfate adenylyltransferase subunit 1 of Yersinia enterocolitica serotype O:8 / biotype 1B (strain NCTC 13174 / 8081).